The chain runs to 347 residues: UPF0284 protein M1627_0030 (347 aa).

Belongs to the UPF0284 family.

In Saccharolobus islandicus (strain M.16.27) (Sulfolobus islandicus), this protein is UPF0284 protein M1627_0030.